The sequence spans 56 residues: Serine protease inhibitor Kazal-type 1 (56 aa).

In terms of domain architecture, Kazal-like spans Pro-3–Cys-56. 3 cysteine pairs are disulfide-bonded: Cys-9/Cys-38, Cys-16/Cys-35, and Cys-24/Cys-56.

Its subcellular location is the secreted. Its function is as follows. Serine protease inhibitor which exhibits anti-trypsin activity. In the pancreas, protects against trypsin-catalyzed premature activation of zymogens. In the male reproductive tract, binds to sperm heads where it modulates sperm capacitance by inhibiting calcium uptake and nitrogen oxide (NO) production. This is Serine protease inhibitor Kazal-type 1 (SPINK1) from Sus scrofa (Pig).